Here is a 1404-residue protein sequence, read N- to C-terminus: DNA-directed RNA polymerase subunit beta' (1404 aa).

Residues C70, C72, C85, and C88 each contribute to the Zn(2+) site. Mg(2+) is bound by residues D460, D462, and D464. Zn(2+) contacts are provided by C814, C889, C896, and C899.

The protein belongs to the RNA polymerase beta' chain family. The RNAP catalytic core consists of 2 alpha, 1 beta, 1 beta' and 1 omega subunit. When a sigma factor is associated with the core the holoenzyme is formed, which can initiate transcription. It depends on Mg(2+) as a cofactor. Zn(2+) serves as cofactor.

It carries out the reaction RNA(n) + a ribonucleoside 5'-triphosphate = RNA(n+1) + diphosphate. Its function is as follows. DNA-dependent RNA polymerase catalyzes the transcription of DNA into RNA using the four ribonucleoside triphosphates as substrates. The protein is DNA-directed RNA polymerase subunit beta' of Xanthomonas axonopodis pv. citri (strain 306).